The primary structure comprises 135 residues: Large ribosomal subunit protein bL12c (135 aa).

It belongs to the bacterial ribosomal protein bL12 family. Homodimer. Part of the ribosomal stalk of the 50S ribosomal subunit. Forms a multimeric L10(L12)X complex, where L10 forms an elongated spine to which 2 to 4 L12 dimers bind in a sequential fashion. Binds GTP-bound translation factors.

It localises to the plastid. Its subcellular location is the chloroplast. Functionally, forms part of the ribosomal stalk which helps the ribosome interact with GTP-bound translation factors. Is thus essential for accurate translation. This is Large ribosomal subunit protein bL12c from Chara vulgaris (Common stonewort).